A 500-amino-acid chain; its full sequence is NAD(P)H-quinone oxidoreductase chain 4, chloroplastic (500 aa).

14 consecutive transmembrane segments (helical) span residues 4-24 (FPWL…IFFL), 35-55 (YTIC…CYHF), 87-107 (IGPI…AWPV), 113-130 (LFHF…GSFS), 134-154 (LLLF…LLCM), 167-187 (FILY…GLAL), 208-228 (VLEI…SPII), 242-262 (HYST…YGLI), 274-294 (SIFS…AALT), 305-325 (IAYS…SLTD), 330-350 (GALL…FLAG), 386-406 (LALP…GIIT), 411-431 (LLIP…LTPI), and 462-482 (LFLS…PDFV).

Belongs to the complex I subunit 4 family.

The protein resides in the plastid. It is found in the chloroplast thylakoid membrane. The enzyme catalyses a plastoquinone + NADH + (n+1) H(+)(in) = a plastoquinol + NAD(+) + n H(+)(out). It carries out the reaction a plastoquinone + NADPH + (n+1) H(+)(in) = a plastoquinol + NADP(+) + n H(+)(out). The chain is NAD(P)H-quinone oxidoreductase chain 4, chloroplastic (ndhD) from Nicotiana tabacum (Common tobacco).